The primary structure comprises 379 residues: MSRSGTDPQQRQQASEADAAAATFRANDHQHIRYNPLQDEWVLVSAHRMKRPWQGQVEPQLLKTVPRHDPLNPLCPGAIRANGEVNPQYDSTFLFDNDFPALQPDAPSPGPSDHPLFQAKSARGVCKVMCFHPWSDVTLPLMSVPEIRAVVDAWASVTEELGAQYPWVQIFENKGAMMGCSNPHPHCQVWASSFLPDIAQREERSQQAYKSQHGEPLLMEYSRQELLRKERLVLTSEHWLVLVPFWATWPYQTLLLPRRHVRRLPELTPAERDDLASIMKKLLTKYDNLFETSFPYSMGWHGAPTGSEAGANWNHWQLHAHYYPPLLRSATVRKFMVGYEMLAQAQRDLTPEQAAERLRALPEVHYHLGQKDRETATIA.

Residues 1–21 (MSRSGTDPQQRQQASEADAAA) are disordered. Residues 9-21 (QQRQQASEADAAA) show a composition bias toward low complexity. Cys75 lines the Zn(2+) pocket. UDP-alpha-D-glucose contacts are provided by residues Ala81, 97 to 98 (ND), and Asn173. His184 serves as a coordination point for Zn(2+). His186 acts as the Tele-UMP-histidine intermediate in catalysis. Gln188 serves as a coordination point for UDP-alpha-D-glucose. Residues Glu202, His301, His319, and His321 each contribute to the Zn(2+) site. Residues 334-337 (KFMV) and 339-340 (YE) contribute to the UDP-alpha-D-glucose site.

It belongs to the galactose-1-phosphate uridylyltransferase type 1 family. As to quaternary structure, homodimer. It depends on Zn(2+) as a cofactor.

It catalyses the reaction alpha-D-galactose 1-phosphate + UDP-alpha-D-glucose = alpha-D-glucose 1-phosphate + UDP-alpha-D-galactose. Its pathway is carbohydrate metabolism; galactose metabolism. Its function is as follows. Plays an important role in galactose metabolism. In Homo sapiens (Human), this protein is Galactose-1-phosphate uridylyltransferase (GALT).